Consider the following 260-residue polypeptide: Exosome complex component Rrp4 (260 aa).

One can recognise an S1 motif domain in the interval 59–128 (NDVVIGVVIV…SSMKIELALR (70 aa)). Residues 136-194 (RTGQIVEVEPVKVPRVIGHGGSMISMLKKETNCSIFVGQNGRIWIDGKDEDIELLSKAL) enclose the KH domain.

The protein belongs to the RRP4 family. Component of the archaeal exosome complex. Forms a trimer of Rrp4 and/or Csl4 subunits. The trimer associates with a hexameric ring-like arrangement composed of 3 Rrp41-Rrp42 heterodimers.

Its subcellular location is the cytoplasm. In terms of biological role, non-catalytic component of the exosome, which is a complex involved in RNA degradation. Increases the RNA binding and the efficiency of RNA degradation. Confers strong poly(A) specificity to the exosome. The chain is Exosome complex component Rrp4 from Methanosarcina mazei (strain ATCC BAA-159 / DSM 3647 / Goe1 / Go1 / JCM 11833 / OCM 88) (Methanosarcina frisia).